A 954-amino-acid polypeptide reads, in one-letter code: Glycine dehydrogenase (decarboxylating) (954 aa).

Lys702 is modified (N6-(pyridoxal phosphate)lysine).

The protein belongs to the GcvP family. As to quaternary structure, the glycine cleavage system is composed of four proteins: P, T, L and H. Requires pyridoxal 5'-phosphate as cofactor.

It carries out the reaction N(6)-[(R)-lipoyl]-L-lysyl-[glycine-cleavage complex H protein] + glycine + H(+) = N(6)-[(R)-S(8)-aminomethyldihydrolipoyl]-L-lysyl-[glycine-cleavage complex H protein] + CO2. Functionally, the glycine cleavage system catalyzes the degradation of glycine. The P protein binds the alpha-amino group of glycine through its pyridoxal phosphate cofactor; CO(2) is released and the remaining methylamine moiety is then transferred to the lipoamide cofactor of the H protein. This chain is Glycine dehydrogenase (decarboxylating), found in Xanthomonas euvesicatoria pv. vesicatoria (strain 85-10) (Xanthomonas campestris pv. vesicatoria).